Here is a 315-residue protein sequence, read N- to C-terminus: tRNA-specific adenosine deaminase subunit tad3 (315 aa).

A CMP/dCMP-type deaminase domain is found at 158 to 299 (KRIESILEDL…AELNHRYLAY (142 aa)). Zn(2+) is bound by residues H211, C253, and C256.

It belongs to the cytidine and deoxycytidylate deaminase family. ADAT3 subfamily. Heterodimer with Tad2.

The protein resides in the cytoplasm. It is found in the nucleus. Its function is as follows. Structural subunit of tRNA-specific adenosine deaminase, which deaminates adenosine-34 (the first, also called wobble position of the anticodon) to inosine in many tRNAs. Inosine-34 allows the decoding of 3 different nucleotides at the third position of mRNA codons, as inosine is able to pair with U, C, and A. The wobble inosine tRNA modification is essential for cell cycle progression in the G1/S and G2/M transitions in fission yeast. The sequence is that of tRNA-specific adenosine deaminase subunit tad3 (tad3) from Schizosaccharomyces pombe (strain 972 / ATCC 24843) (Fission yeast).